Here is a 129-residue protein sequence, read N- to C-terminus: Large ribosomal subunit protein uL22 (129 aa).

The protein belongs to the universal ribosomal protein uL22 family. As to quaternary structure, part of the 50S ribosomal subunit.

In terms of biological role, this protein binds specifically to 23S rRNA; its binding is stimulated by other ribosomal proteins, e.g. L4, L17, and L20. It is important during the early stages of 50S assembly. It makes multiple contacts with different domains of the 23S rRNA in the assembled 50S subunit and ribosome. The globular domain of the protein is located near the polypeptide exit tunnel on the outside of the subunit, while an extended beta-hairpin is found that lines the wall of the exit tunnel in the center of the 70S ribosome. This is Large ribosomal subunit protein uL22 from Bartonella quintana (strain Toulouse) (Rochalimaea quintana).